Here is a 503-residue protein sequence, read N- to C-terminus: Mitogen-activated protein kinase kinae mkk2 (503 aa).

The disordered stretch occupies residues 1 to 130 (MSSSPVPLLR…ASGPASASSS (130 aa)). Residues 53 to 66 (APQPQRPSTRPAPP) show a composition bias toward pro residues. Residues 100–115 (TGLNESTGHSRSSSFT) show a composition bias toward polar residues. Positions 121-130 (ASGPASASSS) are enriched in low complexity. One can recognise a Protein kinase domain in the interval 211–481 (IIELGSLGEG…PWRMLEHPWM (271 aa)). Residues 217–225 (LGEGAGGAV) and K240 each bind ATP. D338 serves as the catalytic Proton acceptor.

It belongs to the protein kinase superfamily. STE Ser/Thr protein kinase family. MAP kinase kinase subfamily.

The catalysed reaction is L-seryl-[protein] + ATP = O-phospho-L-seryl-[protein] + ADP + H(+). It carries out the reaction L-threonyl-[protein] + ATP = O-phospho-L-threonyl-[protein] + ADP + H(+). Functionally, mitogen-activated kinase kinase (MAPKK), part of the cell wall integrity (CWI) signaling pathway composed by three protein kinases bck1, mkk2 and mpkA and responsible for the maintaining of cell-wall integrity balance. The CWI pathway also regulates the oxidative stress response, as well as the production of some secondary metabolites including pyomelanin. In Aspergillus fumigatus (strain CBS 144.89 / FGSC A1163 / CEA10) (Neosartorya fumigata), this protein is Mitogen-activated protein kinase kinae mkk2.